Here is a 118-residue protein sequence, read N- to C-terminus: Ribonuclease P protein component (118 aa).

The protein belongs to the RnpA family. Consists of a catalytic RNA component (M1 or rnpB) and a protein subunit.

The catalysed reaction is Endonucleolytic cleavage of RNA, removing 5'-extranucleotides from tRNA precursor.. Its function is as follows. RNaseP catalyzes the removal of the 5'-leader sequence from pre-tRNA to produce the mature 5'-terminus. It can also cleave other RNA substrates such as 4.5S RNA. The protein component plays an auxiliary but essential role in vivo by binding to the 5'-leader sequence and broadening the substrate specificity of the ribozyme. This is Ribonuclease P protein component from Mycobacterium sp. (strain KMS).